A 271-amino-acid polypeptide reads, in one-letter code: Delta(7)-sterol-C5(6)-desaturase (271 aa).

Transmembrane regions (helical) follow at residues 44-64 (IGGV…IYHL) and 120-140 (VGWL…EFGI). Residues 130-259 (AIYLVIVEFG…TIWMDWMFGT (130 aa)) enclose the Fatty acid hydroxylase domain. A Histidine box-1 motif is present at residues 144–148 (HMELH). Positions 158–162 (HATHH) match the Histidine box-2 motif. The chain crosses the membrane as a helical span at residues 190 to 210 (HVVALLLVPMHFSTHIALIFL). Positions 235–239 (HTIHH) match the Histidine box-3 motif.

It belongs to the sterol desaturase family. It depends on Fe cation as a cofactor.

The protein resides in the endoplasmic reticulum membrane. The enzyme catalyses a Delta(7)-sterol + 2 Fe(II)-[cytochrome b5] + O2 + 2 H(+) = a Delta(5),Delta(7)-sterol + 2 Fe(III)-[cytochrome b5] + 2 H2O. Involved in the biosynthesis of sitosterol and campesterol. This chain is Delta(7)-sterol-C5(6)-desaturase, found in Nicotiana tabacum (Common tobacco).